Consider the following 342-residue polypeptide: N-acetyl-gamma-glutamyl-phosphate reductase (342 aa).

C146 is an active-site residue.

The protein belongs to the NAGSA dehydrogenase family. Type 1 subfamily.

The protein localises to the cytoplasm. It catalyses the reaction N-acetyl-L-glutamate 5-semialdehyde + phosphate + NADP(+) = N-acetyl-L-glutamyl 5-phosphate + NADPH + H(+). It participates in amino-acid biosynthesis; L-arginine biosynthesis; N(2)-acetyl-L-ornithine from L-glutamate: step 3/4. Catalyzes the NADPH-dependent reduction of N-acetyl-5-glutamyl phosphate to yield N-acetyl-L-glutamate 5-semialdehyde. The polypeptide is N-acetyl-gamma-glutamyl-phosphate reductase (Frankia casuarinae (strain DSM 45818 / CECT 9043 / HFP020203 / CcI3)).